The sequence spans 328 residues: Src kinase-associated phosphoprotein 2 (328 aa).

Residues 103 to 206 (EYLRAGYLEK…WVNIIMNSRG (104 aa)) enclose the PH domain. Residues 231-262 (IYEELPEESEKPVTEIETPKATPVPVNNTSGK) are disordered. The segment covering 238–248 (ESEKPVTEIET) has biased composition (basic and acidic residues). The SH3 domain maps to 266–327 (DYANFYRGLW…PKAYIMEMYD (62 aa)).

This sequence belongs to the SKAP family. Post-translationally, phosphorylated on tyrosines.

The protein resides in the cytoplasm. Its function is as follows. May be involved in B-cell and macrophage adhesion processes. May play a role in src signaling pathway. The protein is Src kinase-associated phosphoprotein 2 (skap2) of Xenopus tropicalis (Western clawed frog).